A 100-amino-acid chain; its full sequence is Aspartyl/glutamyl-tRNA(Asn/Gln) amidotransferase subunit C (100 aa).

The protein belongs to the GatC family. As to quaternary structure, heterotrimer of A, B and C subunits.

It carries out the reaction L-glutamyl-tRNA(Gln) + L-glutamine + ATP + H2O = L-glutaminyl-tRNA(Gln) + L-glutamate + ADP + phosphate + H(+). The catalysed reaction is L-aspartyl-tRNA(Asn) + L-glutamine + ATP + H2O = L-asparaginyl-tRNA(Asn) + L-glutamate + ADP + phosphate + 2 H(+). In terms of biological role, allows the formation of correctly charged Asn-tRNA(Asn) or Gln-tRNA(Gln) through the transamidation of misacylated Asp-tRNA(Asn) or Glu-tRNA(Gln) in organisms which lack either or both of asparaginyl-tRNA or glutaminyl-tRNA synthetases. The reaction takes place in the presence of glutamine and ATP through an activated phospho-Asp-tRNA(Asn) or phospho-Glu-tRNA(Gln). The sequence is that of Aspartyl/glutamyl-tRNA(Asn/Gln) amidotransferase subunit C from Janthinobacterium sp. (strain Marseille) (Minibacterium massiliensis).